A 158-amino-acid polypeptide reads, in one-letter code: Transcription elongation factor GreA (158 aa).

This sequence belongs to the GreA/GreB family.

Functionally, necessary for efficient RNA polymerase transcription elongation past template-encoded arresting sites. The arresting sites in DNA have the property of trapping a certain fraction of elongating RNA polymerases that pass through, resulting in locked ternary complexes. Cleavage of the nascent transcript by cleavage factors such as GreA or GreB allows the resumption of elongation from the new 3'terminus. GreA releases sequences of 2 to 3 nucleotides. This Psychrobacter sp. (strain PRwf-1) protein is Transcription elongation factor GreA.